The primary structure comprises 175 residues: Major MR/P fimbria protein (175 aa).

The signal sequence occupies residues 1–23 (MKLNKLALVLGLGLSVVAGSALA). Cys42 and Cys81 are oxidised to a cystine.

The protein belongs to the fimbrial protein family.

It localises to the fimbrium. In terms of biological role, major structural component of mannose-resistant/proteus-like fimbriae of P.mirabilis. The protein is Major MR/P fimbria protein (mrpA) of Proteus mirabilis (strain HI4320).